A 394-amino-acid polypeptide reads, in one-letter code: S-adenosylmethionine synthase (394 aa).

Residue His-16 participates in ATP binding. Residue Asp-18 coordinates Mg(2+). A K(+)-binding site is contributed by Glu-44. Residues Glu-57 and Gln-100 each contribute to the L-methionine site. The flexible loop stretch occupies residues Gln-100 to Ala-110. ATP is bound by residues Asp-172–Lys-174, Arg-239–Phe-240, Asp-248, Arg-254–Lys-255, Ala-271, and Lys-275. Asp-248 serves as a coordination point for L-methionine. An L-methionine-binding site is contributed by Lys-279.

The protein belongs to the AdoMet synthase family. As to quaternary structure, homotetramer; dimer of dimers. Mg(2+) serves as cofactor. K(+) is required as a cofactor.

It localises to the cytoplasm. It carries out the reaction L-methionine + ATP + H2O = S-adenosyl-L-methionine + phosphate + diphosphate. Its pathway is amino-acid biosynthesis; S-adenosyl-L-methionine biosynthesis; S-adenosyl-L-methionine from L-methionine: step 1/1. In terms of biological role, catalyzes the formation of S-adenosylmethionine (AdoMet) from methionine and ATP. The overall synthetic reaction is composed of two sequential steps, AdoMet formation and the subsequent tripolyphosphate hydrolysis which occurs prior to release of AdoMet from the enzyme. The polypeptide is S-adenosylmethionine synthase (Enterococcus faecalis (strain ATCC 700802 / V583)).